Reading from the N-terminus, the 466-residue chain is 3-isopropylmalate dehydratase large subunit (466 aa).

The [4Fe-4S] cluster site is built by Cys347, Cys407, and Cys410.

The protein belongs to the aconitase/IPM isomerase family. LeuC type 1 subfamily. As to quaternary structure, heterodimer of LeuC and LeuD. Requires [4Fe-4S] cluster as cofactor.

The enzyme catalyses (2R,3S)-3-isopropylmalate = (2S)-2-isopropylmalate. The protein operates within amino-acid biosynthesis; L-leucine biosynthesis; L-leucine from 3-methyl-2-oxobutanoate: step 2/4. In terms of biological role, catalyzes the isomerization between 2-isopropylmalate and 3-isopropylmalate, via the formation of 2-isopropylmaleate. The protein is 3-isopropylmalate dehydratase large subunit of Buchnera aphidicola subsp. Diuraphis noxia.